Reading from the N-terminus, the 317-residue chain is Transaldolase (317 aa).

The active-site Schiff-base intermediate with substrate is the Lys132.

It belongs to the transaldolase family. Type 1 subfamily. Homodimer.

The protein localises to the cytoplasm. The enzyme catalyses D-sedoheptulose 7-phosphate + D-glyceraldehyde 3-phosphate = D-erythrose 4-phosphate + beta-D-fructose 6-phosphate. It participates in carbohydrate degradation; pentose phosphate pathway; D-glyceraldehyde 3-phosphate and beta-D-fructose 6-phosphate from D-ribose 5-phosphate and D-xylulose 5-phosphate (non-oxidative stage): step 2/3. Functionally, transaldolase is important for the balance of metabolites in the pentose-phosphate pathway. The sequence is that of Transaldolase from Shigella dysenteriae serotype 1 (strain Sd197).